A 315-amino-acid polypeptide reads, in one-letter code: DNA-directed RNA polymerase subunit alpha (315 aa).

Positions 1–228 are alpha N-terminal domain (alpha-NTD); that stretch reads MLEIEKPKIE…EHLRLFVGLT (228 aa). Residues 245-315 form an alpha C-terminal domain (alpha-CTD) region; the sequence is KNKLLEMPIE…LGLDLRHDEE (71 aa).

The protein belongs to the RNA polymerase alpha chain family. Homodimer. The RNAP catalytic core consists of 2 alpha, 1 beta, 1 beta' and 1 omega subunit. When a sigma factor is associated with the core the holoenzyme is formed, which can initiate transcription.

The catalysed reaction is RNA(n) + a ribonucleoside 5'-triphosphate = RNA(n+1) + diphosphate. In terms of biological role, DNA-dependent RNA polymerase catalyzes the transcription of DNA into RNA using the four ribonucleoside triphosphates as substrates. The sequence is that of DNA-directed RNA polymerase subunit alpha from Desulforudis audaxviator (strain MP104C).